The following is a 779-amino-acid chain: Lon protease (779 aa).

In terms of domain architecture, Lon N-terminal spans 7–190 (VPVLFLNDSI…LLIGWTGDHL (184 aa)). Position 352-359 (352-359 (GPPGVGKT)) interacts with ATP. The Lon proteolytic domain occupies 589-769 (TAVPGVATGL…ADIIAAALEP (181 aa)). Active-site residues include Ser-675 and Lys-718.

The protein belongs to the peptidase S16 family. Homohexamer. Organized in a ring with a central cavity. Oligomerization is Mg(2+)-dependent.

The protein localises to the cytoplasm. The catalysed reaction is Hydrolysis of proteins in presence of ATP.. Stimulated by unfolded protein. Its function is as follows. ATP-dependent serine protease that mediates the selective degradation of mutant and abnormal proteins as well as certain short-lived regulatory proteins. Required for cellular homeostasis and for survival from DNA damage and developmental changes induced by stress. Degrades polypeptides processively to yield small peptide fragments that are 5 to 10 amino acids long. Binds to DNA in a double-stranded, site-specific manner. In Mycolicibacterium smegmatis (Mycobacterium smegmatis), this protein is Lon protease.